The chain runs to 572 residues: Probable pyruvate decarboxylase C186.09 (572 aa).

Substrate-binding residues include Asp-38 and His-125. A thiamine pyrophosphate binding region spans residues 400 to 482; that stretch reads DSWFGGMRIT…FLINNRGYTI (83 aa). Positions 450, 477, and 479 each coordinate Mg(2+). Residue Glu-483 participates in substrate binding.

It belongs to the TPP enzyme family. In terms of assembly, homotetramer. It depends on a metal cation as a cofactor. Thiamine diphosphate is required as a cofactor.

It carries out the reaction a 2-oxocarboxylate + H(+) = an aldehyde + CO2. The polypeptide is Probable pyruvate decarboxylase C186.09 (Schizosaccharomyces pombe (strain 972 / ATCC 24843) (Fission yeast)).